The sequence spans 370 residues: GTPase Obg (370 aa).

An Obg domain is found at 1-159 (MKFIDEARIE…RMLRLELKVL (159 aa)). Positions 127–146 (NLHFKSSTNRAPRQKTDGKP) are disordered. The OBG-type G domain occupies 160 to 334 (ADVGLLGMPN…LCYAIYDYLA (175 aa)). GTP contacts are provided by residues 166-173 (GMPNAGKS), 191-195 (FTTLA), 213-216 (DIPG), 284-287 (NKLD), and 315-317 (SAL). Mg(2+) is bound by residues S173 and T193.

This sequence belongs to the TRAFAC class OBG-HflX-like GTPase superfamily. OBG GTPase family. Monomer. It depends on Mg(2+) as a cofactor.

It localises to the cytoplasm. Its function is as follows. An essential GTPase which binds GTP, GDP and possibly (p)ppGpp with moderate affinity, with high nucleotide exchange rates and a fairly low GTP hydrolysis rate. Plays a role in control of the cell cycle, stress response, ribosome biogenesis and in those bacteria that undergo differentiation, in morphogenesis control. This Burkholderia lata (strain ATCC 17760 / DSM 23089 / LMG 22485 / NCIMB 9086 / R18194 / 383) protein is GTPase Obg.